The chain runs to 103 residues: SOSS complex subunit C (103 aa).

It belongs to the SOSS-C family. Belongs to the multiprotein complex Integrator. Component of the SOSS complex, composed of SOSS-B (SOSS-B1/NABP2 or SOSS-B2/NABP1), SOSS-A/INTS3 and SOSS-C/INIP.

The protein resides in the nucleus. Component of the SOSS complex, a multiprotein complex that functions downstream of the MRN complex to promote DNA repair and G2/M checkpoint. The SOSS complex associates with single-stranded DNA at DNA lesions and influences diverse endpoints in the cellular DNA damage response including cell-cycle checkpoint activation, recombinational repair and maintenance of genomic stability. Required for efficient homologous recombination-dependent repair of double-strand breaks (DSBs). The protein is SOSS complex subunit C (INIP) of Gallus gallus (Chicken).